The chain runs to 468 residues: Tyrosine-protein phosphatase YopH (468 aa).

Residues 127–194 (ARGHVSSHSH…TVSPYGPEAR (68 aa)) are disordered. The span at 130 to 140 (HVSSHSHSVLH) shows a compositional bias: low complexity. The Tyrosine-protein phosphatase domain occupies 152-461 (SHLDPRTPPL…DVLIKLAEGQ (310 aa)). Catalysis depends on C403, which acts as the Phosphocysteine intermediate.

This sequence belongs to the protein-tyrosine phosphatase family. Non-receptor class subfamily. Monomer.

It localises to the secreted. It carries out the reaction O-phospho-L-tyrosyl-[protein] + H2O = L-tyrosyl-[protein] + phosphate. Its function is as follows. Essential virulence determinant. This protein is a protein tyrosine phosphatase. The essential function of YopH in Yersinia pathogenesis is host-protein dephosphorylation. It contributes to the ability of the bacteria to resist phagocytosis by peritoneal macrophages. The protein is Tyrosine-protein phosphatase YopH (yopH) of Yersinia enterocolitica.